The chain runs to 203 residues: Ribosomal RNA small subunit methyltransferase G (203 aa).

S-adenosyl-L-methionine-binding positions include Gly73, Leu78, 124-125 (VE), and Arg139.

Belongs to the methyltransferase superfamily. RNA methyltransferase RsmG family.

The protein resides in the cytoplasm. It catalyses the reaction guanosine(527) in 16S rRNA + S-adenosyl-L-methionine = N(7)-methylguanosine(527) in 16S rRNA + S-adenosyl-L-homocysteine. Specifically methylates the N7 position of guanine in position 527 of 16S rRNA. This chain is Ribosomal RNA small subunit methyltransferase G, found in Haemophilus influenzae (strain 86-028NP).